A 144-amino-acid chain; its full sequence is Putative pre-16S rRNA nuclease (144 aa).

Belongs to the YqgF nuclease family.

The protein localises to the cytoplasm. In terms of biological role, could be a nuclease involved in processing of the 5'-end of pre-16S rRNA. The chain is Putative pre-16S rRNA nuclease from Oenococcus oeni (strain ATCC BAA-331 / PSU-1).